The primary structure comprises 1308 residues: Contactin-associated protein-like 4 (1308 aa).

The first 25 residues, 1-25, serve as a signal peptide directing secretion; it reads MGSVTGAVLKTLLLLSTQNWNRVEA. The Extracellular segment spans residues 26 to 1241; sequence GNSYDCDDPL…LANAIKSDSA (1216 aa). Positions 31 to 177 constitute an F5/8 type C domain; it reads CDDPLVSALP…IGMRIEVFGC (147 aa). A disulfide bridge links cysteine 31 with cysteine 177. 2 consecutive Laminin G-like domains span residues 212–364 and 398–547; these read FKTM…SFSC and FRTW…IDSC. N-linked (GlcNAc...) asparagine glycosylation is found at asparagine 260, asparagine 285, asparagine 359, and asparagine 538. Intrachain disulfides connect cysteine 332-cysteine 364, cysteine 515-cysteine 547, cysteine 553-cysteine 564, and cysteine 558-cysteine 573. Residues 549-586 form the EGF-like 1 domain; that stretch reads ISDRCLPNYCEHGGECSQSWSTFHCNCTNTGYRGATCH. Asparagine 574 carries N-linked (GlcNAc...) asparagine glycosylation. A disulfide bridge connects residues cysteine 575 and cysteine 585. The Fibrinogen C-terminal domain occupies 587 to 792; sequence NSIYEQSCEA…LLCQGDRSFW (206 aa). N-linked (GlcNAc...) asparagine glycans are attached at residues asparagine 602, asparagine 625, asparagine 637, asparagine 706, and asparagine 748. Residues 793-957 form the Laminin G-like 3 domain; the sequence is NSASFDTEAS…AQVTPEVQPG (165 aa). Disulfide bonds link cysteine 931/cysteine 958, cysteine 962/cysteine 975, cysteine 969/cysteine 984, and cysteine 986/cysteine 996. Residues 958 to 997 form the EGF-like 2 domain; it reads CRGHCSSYGKLCRNGGKCRERPIGFFCDCTFSAYTGPFCS. Residues asparagine 1023 and asparagine 1073 are each glycosylated (N-linked (GlcNAc...) asparagine). Residues 1046–1202 enclose the Laminin G-like 4 domain; the sequence is FRTTRTPSLL…VTGHVTESSC (157 aa). Cysteine 1167 and cysteine 1202 are oxidised to a cystine. Residues 1242–1262 form a helical membrane-spanning segment; it reads VIGGLIAVVIFILLCITAIAV. Over 1263–1308 the chain is Cytoplasmic; it reads RIYQQKRLYKRSEAKRSENVDSAEAVLKSELNIQNAVNENQKEYFF.

The protein belongs to the neurexin family. As to quaternary structure, interacts with TIAM1.

Its subcellular location is the presynaptic cell membrane. In terms of biological role, presynaptic protein involved in both dopaminergic synaptic transmission and GABAergic system, thereby participating in the structural maturation of inhibitory interneuron synapses. Involved in the dopaminergic synaptic transmission by attenuating dopamine release through a presynaptic mechanism. Also participates in the GABAergic system. The chain is Contactin-associated protein-like 4 (CNTNAP4) from Homo sapiens (Human).